Consider the following 246-residue polypeptide: mRNA-decapping protein g5R (246 aa).

Residues 91-239 (KYQKFKKNWL…IIGPAFNFIK (149 aa)) enclose the Nudix hydrolase domain. The Nudix box motif lies at 128-149 (GKPKENESDLACAIREFEEETG). E134 provides a ligand contact to Mg(2+). E143 (nucleophile) is an active-site residue. The Mg(2+) site is built by E147 and E169.

This sequence belongs to the Nudix hydrolase family. DIPP subfamily. As to quaternary structure, interacts with host RPL23A. The cofactor is Mg(2+). It depends on Mn(2+) as a cofactor.

It is found in the host rough endoplasmic reticulum. The catalysed reaction is diphospho-myo-inositol polyphosphate + H2O = myo-inositol polyphosphate + phosphate.. Functionally, decapping enzyme required for the removal of the 5'-end m7GpppN cap tethered to viral and host mRNAs to allow their decay in cells. May therefore accelerate viral and cellular mRNA turnover to eliminate competing host mRNAs and allow stage-specific synthesis of viral proteins. Acceleration of the turnover of cellular transcripts may even promote the shutoff of host protein synthesis. In addition to the mRNA cap, g5R also efficiently hydrolyzes diphosphoinositol polyphosphates. Down-regulation of the level of PP-InsP5 (diphosphoinositol pentakisphosphate) may play a role in viral manipulation of the cellular secretory pathway, a step necessary for the formation of virions. Binds viral and cellular poly(A) mRNAs, thereby decreasing both types of mRNAs. The polypeptide is mRNA-decapping protein g5R (African swine fever virus (isolate Pig/Kenya/KEN-50/1950) (ASFV)).